Consider the following 138-residue polypeptide: Proofreading thioesterase EntH (138 aa).

The Nucleophile or proton acceptor role is filled by Glu64.

This sequence belongs to the thioesterase PaaI family. As to quaternary structure, homotetramer. Dimer of dimers. Interacts specifically with the aryl carrier protein (ArCP) domain of EntB.

It is found in the cytoplasm. It participates in siderophore biosynthesis; enterobactin biosynthesis. Functionally, required for optimal enterobactin synthesis. Acts as a proofreading enzyme that prevents EntB misacylation by hydrolyzing the thioester bound existing between EntB and wrongly charged molecules. The chain is Proofreading thioesterase EntH from Salmonella arizonae (strain ATCC BAA-731 / CDC346-86 / RSK2980).